Reading from the N-terminus, the 338-residue chain is Nicotinate-nucleotide--dimethylbenzimidazole phosphoribosyltransferase (338 aa).

The active-site Proton acceptor is Glu305.

The protein belongs to the CobT family.

It carries out the reaction 5,6-dimethylbenzimidazole + nicotinate beta-D-ribonucleotide = alpha-ribazole 5'-phosphate + nicotinate + H(+). It functions in the pathway nucleoside biosynthesis; alpha-ribazole biosynthesis; alpha-ribazole from 5,6-dimethylbenzimidazole: step 1/2. Its function is as follows. Catalyzes the synthesis of alpha-ribazole-5'-phosphate from nicotinate mononucleotide (NAMN) and 5,6-dimethylbenzimidazole (DMB). In Rhizobium meliloti (strain 1021) (Ensifer meliloti), this protein is Nicotinate-nucleotide--dimethylbenzimidazole phosphoribosyltransferase.